The following is a 94-amino-acid chain: CRISPR-associated endoribonuclease Cas2 (94 aa).

A Mg(2+)-binding site is contributed by D11.

The protein belongs to the CRISPR-associated endoribonuclease Cas2 protein family. In terms of assembly, homodimer, forms a heterotetramer with a Cas1 homodimer. The cofactor is Mg(2+).

Its function is as follows. CRISPR (clustered regularly interspaced short palindromic repeat), is an adaptive immune system that provides protection against mobile genetic elements (viruses, transposable elements and conjugative plasmids). CRISPR clusters contain sequences complementary to antecedent mobile elements and target invading nucleic acids. CRISPR clusters are transcribed and processed into CRISPR RNA (crRNA). Functions as a ssRNA-specific endoribonuclease. Involved in the integration of spacer DNA into the CRISPR cassette. In Allochromatium vinosum (strain ATCC 17899 / DSM 180 / NBRC 103801 / NCIMB 10441 / D) (Chromatium vinosum), this protein is CRISPR-associated endoribonuclease Cas2.